An 834-amino-acid polypeptide reads, in one-letter code: MWGLGARGPDRGLLLALALGGLARAGGVEVEPGGAHGESGGFQVVTFEWAHVQDPYVIALWILVASLAKIGFHLSHKVTSVVPESALLIVLGLVLGGIVWAADHIASFTLTPTVFFFYLLPPIVLDAGYFMPNRLFFGNLGTILLYAVVGTVWNAATTGLSLYGVFLSGLMGDLQIGLLDFLLFGSLMAAVDPVAVLAVFEEVHVNEVLFIIVFGESLLNDAVTVVLYNVFESFVALGGDNVTGVDCVKGIVSFFVVSLGGTLVGVVFAFLLSLVTRFTKHVRIIEPGFVFIISYLSYLTSEMLSLSAILAITFCGICCQKYVKANISEQSATTVRYTMKMLASSAETIIFMFLGISAVNPFIWTWNTAFVLLTLVFISVYRAIGVVLQTWLLNRYRMVQLEPIDQVVLSYGGLRGAVAFALVVLLDGDKVKEKNLFVSTTIIVVFFTVIFQGLTIKPLVQWLKVKRSEHREPRLNEKLHGRAFDHILSAIEDISGQIGHNYLRDKWSHFDRKFLSRVLMRRSAQKSRDRILNVFHELNLKDAISYVAEGERRGSLAFIRSPSTDNVVNVDFTPRSSTVEASVSYLLRENVSAVCLDMQSLEQRRRSIRDAEDMVTHHTLQQYLYKPRQEYKHLYSRHELTPTEDEKQDREIFHRTMRKRLESFKSTKLGLNQNKKAAKLYKRERAQKRRNSSIPNGKLPMESPAQNFTIKEKDLELSDTEEPPNYDEEMSGGIEFLASVTKDTASDSPAGIDNPVFSPDEALDRSLLARLPPWLSPGETVVPSQRARTQIPYSPGTFCRLMPFRLSSKSVDSFLQADGPEERPPAALPESTHM.

The signal sequence occupies residues 1–25 (MWGLGARGPDRGLLLALALGGLARA). At 26 to 51 (GGVEVEPGGAHGESGGFQVVTFEWAH) the chain is on the extracellular side. A helical membrane pass occupies residues 52–74 (VQDPYVIALWILVASLAKIGFHL). The Cytoplasmic segment spans residues 75-82 (SHKVTSVV). A helical membrane pass occupies residues 83–102 (PESALLIVLGLVLGGIVWAA). Residues 103–111 (DHIASFTLT) lie on the Extracellular side of the membrane. Residues 112–129 (PTVFFFYLLPPIVLDAGY) form a helical membrane-spanning segment. The Cytoplasmic portion of the chain corresponds to 130–132 (FMP). A helical membrane pass occupies residues 133–168 (NRLFFGNLGTILLYAVVGTVWNAATTGLSLYGVFLS). Positions 138, 141, and 142 each coordinate a 1,2-diacyl-sn-glycero-3-phospho-(1D-myo-inositol). Residues 169-181 (GLMGDLQIGLLDF) are Extracellular-facing. A helical transmembrane segment spans residues 182 to 203 (LLFGSLMAAVDPVAVLAVFEEV). The Cytoplasmic portion of the chain corresponds to 204-205 (HV). A helical transmembrane segment spans residues 206 to 237 (NEVLFIIVFGESLLNDAVTVVLYNVFESFVAL). The Extracellular portion of the chain corresponds to 238 to 244 (GGDNVTG). Residue N241 is glycosylated (N-linked (GlcNAc...) asparagine). Residues 245–279 (VDCVKGIVSFFVVSLGGTLVGVVFAFLLSLVTRFT) form a helical membrane-spanning segment. Residues 280–281 (KH) are Cytoplasmic-facing. The chain crosses the membrane as a helical span at residues 282–304 (VRIIEPGFVFIISYLSYLTSEML). Residues 305-306 (SL) are Extracellular-facing. The chain crosses the membrane as a helical span at residues 307-323 (SAILAITFCGICCQKYV). Topologically, residues 324 to 330 (KANISEQ) are cytoplasmic. A helical membrane pass occupies residues 331-359 (SATTVRYTMKMLASSAETIIFMFLGISAV). Residues 360-367 (NPFIWTWN) are Extracellular-facing. Residues 368 to 389 (TAFVLLTLVFISVYRAIGVVLQ) form a helical membrane-spanning segment. The Cytoplasmic segment spans residues 390 to 402 (TWLLNRYRMVQLE). M398 serves as a coordination point for a 1,2-diacyl-sn-glycero-3-phospho-(1D-myo-inositol). A helical transmembrane segment spans residues 403 to 426 (PIDQVVLSYGGLRGAVAFALVVLL). Topologically, residues 427–433 (DGDKVKE) are extracellular. Residues 434–467 (KNLFVSTTIIVVFFTVIFQGLTIKPLVQWLKVKR) traverse the membrane as a helical segment. Over 468-834 (SEHREPRLNE…PAALPESTHM (367 aa)) the chain is Cytoplasmic. 3 residues coordinate a 1,2-diacyl-sn-glycero-3-phospho-(1D-myo-inositol): Q497, I498, and H500. Phosphoserine occurs at positions 555 and 563. Residues 575 to 589 (RSSTVEASVSYLLRE) form an interaction with EZR region. An interaction with NHERF4 region spans residues 590–667 (NVSAVCLDMQ…RKRLESFKST (78 aa)). An interaction with AHCYL1 region spans residues 591 to 695 (VSAVCLDMQS…AQKRRNSSIP (105 aa)). A phosphoserine mark is found at S592 and S607. S663 carries the post-translational modification Phosphoserine; by SGK1. A compositionally biased stretch (basic residues) spans 679–691 (KLYKRERAQKRRN). Residues 679–728 (KLYKRERAQKRRNSSIPNGKLPMESPAQNFTIKEKDLELSDTEEPPNYDE) are disordered. Acidic residues predominate over residues 717–728 (LSDTEEPPNYDE). 3 positions are modified to phosphoserine: S718, S810, and S813. The disordered stretch occupies residues 814-834 (FLQADGPEERPPAALPESTHM).

It belongs to the monovalent cation:proton antiporter 1 (CPA1) transporter (TC 2.A.36) family. As to quaternary structure, homodimer. Found in the forms of complex and dynamic macromolecular complexes. Binds NHERF1 and NHERF2. Interacts with CHP1; increases SLC9A3 trafficking and activity at the plasma membrane. Interacts with CHP2 and SHANK2. Interacts with PDZK1 (via C-terminal PDZ domain). Interacts with NHERF4 and interaction decrease in response to elevated calcium ion levels. Interacts with AHCYL1; the interaction is required for SLC9A3 activity. Interacts with SNX27 (via PDZ domains); directs SLC9A3 membrane insertion from early endosomes to the plasma membrane. Interacts with EZR; interaction targets SLC9A3 to the apical membrane. In terms of processing, phosphorylated by PKA, which inhibits activity. Phosphorylation at Ser-663 by SGK1 is associated with increased abundance at the cell membrane. Phosphorylation at Ser-718 by CSNK2A1 regulates SLC9A3 activity through the formation of multiple signaling complexes.

Its subcellular location is the apical cell membrane. The protein resides in the cell membrane. The protein localises to the recycling endosome membrane. It is found in the early endosome membrane. It catalyses the reaction Na(+)(in) + H(+)(out) = Na(+)(out) + H(+)(in). With respect to regulation, seems to switch between active and inactive modes in response to various stimuli. Activated directly or indirectly by membrane phosphatidylinositol (PIs). Regulated by a variety of auxiliary proteins, which facilitate the maturation, cell surface expression and function of the transporter. Inhibited specifically by the drug tenapanor. In terms of biological role, plasma membrane Na(+)/H(+) antiporter. Exchanges intracellular H(+) ions for extracellular Na(+) in 1:1 stoichiometry, playing a key role in salt and fluid absorption and pH homeostasis. Major apical Na(+)/H(+) exchanger in kidney and intestine playing an important role in renal and intestine Na(+) absorption and blood pressure regulation. In Homo sapiens (Human), this protein is Sodium/hydrogen exchanger 3.